Consider the following 325-residue polypeptide: Small ribosomal subunit protein uS4m (325 aa).

Residues 146-209 (KRIDMILLRS…HKQNLIHRLK (64 aa)) enclose the S4 RNA-binding domain.

The protein belongs to the universal ribosomal protein uS4 family.

It localises to the mitochondrion. The polypeptide is Small ribosomal subunit protein uS4m (mrps4) (Dictyostelium citrinum (Slime mold)).